The sequence spans 134 residues: B3 domain-containing protein At1g16640 (134 aa).

A DNA-binding region (TF-B3) is located at residues valine 7 to asparagine 100.

It localises to the nucleus. The chain is B3 domain-containing protein At1g16640 from Arabidopsis thaliana (Mouse-ear cress).